The primary structure comprises 435 residues: Dual specificity mitogen-activated protein kinase kinase jkk-1 (435 aa).

A compositionally biased stretch (basic and acidic residues) spans 35-49 (RDRRSTSVDQKHKEC). The segment at 35–90 (RDRRSTSVDQKHKECSSTSSSPQHQRPNNIGYLTSPMERKFTPLSMKPSPSRRDTE) is disordered. Polar residues predominate over residues 50–66 (SSTSSSPQHQRPNNIGY). Residues 122–385 (IHIISLLGSG…YRQLMKHDFY (264 aa)) enclose the Protein kinase domain. Residues 128 to 136 (LGSGSCGVV) and Lys149 contribute to the ATP site. Asp246 functions as the Proton acceptor in the catalytic mechanism.

The protein belongs to the protein kinase superfamily. STE Ser/Thr protein kinase family. MAP kinase kinase subfamily. As to quaternary structure, interacts with unc-16. It depends on Mg(2+) as a cofactor. As to expression, expressed in most neurons, including nerve ring, head ganglions, dorsal and ventral nerve cords and tail ganglions.

It localises to the cytoplasm. The protein localises to the perikaryon. The protein resides in the cell projection. It is found in the axon. It catalyses the reaction L-seryl-[protein] + ATP = O-phospho-L-seryl-[protein] + ADP + H(+). The enzyme catalyses L-threonyl-[protein] + ATP = O-phospho-L-threonyl-[protein] + ADP + H(+). The catalysed reaction is L-tyrosyl-[protein] + ATP = O-phospho-L-tyrosyl-[protein] + ADP + H(+). Its function is as follows. Dual specificity protein kinase which acts as an essential component of the JNK signal transduction pathway. May phosphorylate jnk-1. Plays a role in coordinating locomotion via D-type GABAergic motoneurons and in regulating synaptic vesicle transport downstream of adapter protein unc-16 and probably by activating jnk-1. Positively regulates lifespan. Upon environmental stress such as heat stress regulates daf-16 nuclear translocation probably by activating jnk-1. Regulates germline cell apoptosis in response to heavy metals such as Cu(2+) and to arsenite. The polypeptide is Dual specificity mitogen-activated protein kinase kinase jkk-1 (Caenorhabditis elegans).